The chain runs to 781 residues: Cytosolic phospholipase A2 beta (781 aa).

The region spanning 1–112 (MAVAEVSRTC…RAGEFRRESF (112 aa)) is the C2 domain. Residues D26, D32, D82, D84, and D90 each coordinate Ca(2+). One can recognise a PLA2c domain in the interval 246–781 (EAGLRELAVR…VQRRRQRRPH (536 aa)). S335 functions as the Nucleophile in the catalytic mechanism. D615 functions as the Proton acceptor in the catalytic mechanism.

Ca(2+) is required as a cofactor. As to expression, widely expressed. Expressed at higher level in brain, heart, liver, cerebellum and pancreas.

Its subcellular location is the cytoplasm. It localises to the cytosol. The protein localises to the mitochondrion membrane. The protein resides in the early endosome membrane. The enzyme catalyses a 1,2-diacyl-sn-glycero-3-phosphocholine + H2O = a 1-acyl-sn-glycero-3-phosphocholine + a fatty acid + H(+). It catalyses the reaction a 1-acyl-sn-glycero-3-phosphocholine + H2O = sn-glycerol 3-phosphocholine + a fatty acid + H(+). The catalysed reaction is 1-hexadecanoyl-2-(9Z,12Z-octadecadienoyl)-sn-glycero-3-phosphoethanolamine + H2O = 1-hexadecanoyl-sn-glycero-3-phosphoethanolamine + (9Z,12Z)-octadecadienoate + H(+). It carries out the reaction 1-hexadecanoyl-2-(5Z,8Z,11Z,14Z-eicosatetraenoyl)-sn-glycero-3-phosphoethanolamine + H2O = 1-hexadecanoyl-sn-glycero-3-phosphoethanolamine + (5Z,8Z,11Z,14Z)-eicosatetraenoate + H(+). The enzyme catalyses 1-hexadecanoyl-sn-glycero-3-phosphocholine + H2O = sn-glycerol 3-phosphocholine + hexadecanoate + H(+). It catalyses the reaction 1-hexadecanoyl-2-(5Z,8Z,11Z,14Z-eicosatetraenoyl)-sn-glycero-3-phosphocholine + H2O = 1-hexadecanoyl-sn-glycero-3-phosphocholine + (5Z,8Z,11Z,14Z)-eicosatetraenoate + H(+). The catalysed reaction is 1-hexadecanoyl-2-(5Z,8Z,11Z,14Z-eicosatetraenoyl)-sn-glycero-3-phosphocholine + H2O = 2-(5Z,8Z,11Z,14Z)-eicosatetraenoyl-sn-glycero-3-phosphocholine + hexadecanoate + H(+). Stimulated by cytosolic Ca(2+). Functionally, calcium-dependent phospholipase A1 and A2 and lysophospholipase that may play a role in membrane phospholipid remodeling. In terms of biological role, calcium-dependent phospholipase A2 and lysophospholipase. Cleaves the ester bond of the fatty acyl group attached to the sn-2 position of phosphatidylethanolamines, producing lysophospholipids that may be used in deacylation-reacylation cycles. Hydrolyzes lysophosphatidylcholines with low efficiency but is inefficient toward phosphatidylcholines. Its function is as follows. Calcium-dependent phospholipase A1 and A2 and lysophospholipase. Cleaves the ester bond of the fatty acyl group attached to the sn-1 or sn-2 position of diacyl phospholipids (phospholipase A1 and A2 activity, respectively), producing lysophospholipids that may be used in deacylation-reacylation cycles. Can further hydrolyze lysophospholipids enabling complete deacylation. Has no activity toward alkylacyl phospholipids. In Homo sapiens (Human), this protein is Cytosolic phospholipase A2 beta (PLA2G4B).